A 299-amino-acid polypeptide reads, in one-letter code: MLESHLIIYFLLAVIQFLLGIFTNGIIVVVNGIDLIKHRKMAPLDLLLSCLAVSRIFLQLFIFYVNVIVIFFIEFIMCSANCAILLFINELELWLATWLGVFYCAKVASVRHPLFXWLKMRISKLVPWMILGSLLYVSMICVFHSKYAGFMVPYFLRNFFSQNTTIQKEDTLAIQIFSFVAEFSVPLLIFLVAVLLLIFSLGRHTRQMRNTVAGSRVPGRGAPISALLSILSFLILYFSHCMIKVFLSSLKFHIRRFIFLFFILVIGIYPSGHSLILILGNPKLKQNAKKFLLHSKCCQ.

The Extracellular portion of the chain corresponds to 1 to 9; that stretch reads MLESHLIIY. The helical transmembrane segment at 10–30 threads the bilayer; sequence FLLAVIQFLLGIFTNGIIVVV. At 31–55 the chain is on the cytoplasmic side; sequence NGIDLIKHRKMAPLDLLLSCLAVSR. A helical transmembrane segment spans residues 56 to 76; the sequence is IFLQLFIFYVNVIVIFFIEFI. Topologically, residues 77 to 81 are extracellular; that stretch reads MCSAN. A helical transmembrane segment spans residues 82–102; that stretch reads CAILLFINELELWLATWLGVF. Over 103–124 the chain is Cytoplasmic; sequence YCAKVASVRHPLFXWLKMRISK. Residues 125–145 form a helical membrane-spanning segment; the sequence is LVPWMILGSLLYVSMICVFHS. Residues 146-178 are Extracellular-facing; sequence KYAGFMVPYFLRNFFSQNTTIQKEDTLAIQIFS. N-linked (GlcNAc...) asparagine glycosylation is present at N163. A helical transmembrane segment spans residues 179–199; the sequence is FVAEFSVPLLIFLVAVLLLIF. Residues 200-222 lie on the Cytoplasmic side of the membrane; that stretch reads SLGRHTRQMRNTVAGSRVPGRGA. A helical transmembrane segment spans residues 223 to 243; it reads PISALLSILSFLILYFSHCMI. The Extracellular segment spans residues 244–257; it reads KVFLSSLKFHIRRF. A helical membrane pass occupies residues 258-278; it reads IFLFFILVIGIYPSGHSLILI. At 279-299 the chain is on the cytoplasmic side; that stretch reads LGNPKLKQNAKKFLLHSKCCQ.

The protein belongs to the G-protein coupled receptor T2R family.

The protein resides in the membrane. Its function is as follows. Receptor that may play a role in the perception of bitterness and is gustducin-linked. May play a role in sensing the chemical composition of the gastrointestinal content. The activity of this receptor may stimulate alpha gustducin, mediate PLC-beta-2 activation and lead to the gating of TRPM5. In Gorilla gorilla gorilla (Western lowland gorilla), this protein is Taste receptor type 2 member 1 (TAS2R1).